A 467-amino-acid chain; its full sequence is Septin-10 (467 aa).

Positions 63-329 constitute a Septin-type G domain; the sequence is QGFCFNILCV…ELYRRCKLEE (267 aa). A G1 motif region spans residues 73-80; the sequence is GETGIGKS. GTP is bound by residues 73–80, Gly-128, 209–217, Gly-263, and Arg-278; these read GETGIGKS and KADTVSKTE. The interval 125–128 is G3 motif; that stretch reads NTVG. The G4 motif stretch occupies residues 208–211; it reads AKAD.

The protein belongs to the TRAFAC class TrmE-Era-EngA-EngB-Septin-like GTPase superfamily. Septin GTPase family. In terms of assembly, septins polymerize into heterooligomeric protein complexes that form filaments, and can associate with cellular membranes, actin filaments and microtubules. GTPase activity is required for filament formation. Interacts with ADGB. Proteolytically cleaved in vitro in a calmodulin-dependent manner.

The protein resides in the cytoplasm. The protein localises to the cytoskeleton. It localises to the cell projection. Its subcellular location is the cilium. It is found in the flagellum. Functionally, filament-forming cytoskeletal GTPase. May play a role in cytokinesis (Potential). This Pongo abelii (Sumatran orangutan) protein is Septin-10.